A 144-amino-acid polypeptide reads, in one-letter code: Large ribosomal subunit protein uL13 (144 aa).

The protein belongs to the universal ribosomal protein uL13 family. In terms of assembly, part of the 50S ribosomal subunit.

Its function is as follows. This protein is one of the early assembly proteins of the 50S ribosomal subunit, although it is not seen to bind rRNA by itself. It is important during the early stages of 50S assembly. The protein is Large ribosomal subunit protein uL13 of Mycoplasmopsis pulmonis (strain UAB CTIP) (Mycoplasma pulmonis).